Consider the following 563-residue polypeptide: Chitinase A (563 aa).

Residues 1 to 23 (MRKFNKPLLALLIGSTLCSAAQA) form the signal peptide. One can recognise a GH18 domain in the interval 158 to 559 (KVVGSYFVEW…NSMNASLGNS (402 aa)). Glu-315 acts as the Proton donor in catalysis.

The protein belongs to the glycosyl hydrolase 18 family. Chitinase class II subfamily.

It carries out the reaction Random endo-hydrolysis of N-acetyl-beta-D-glucosaminide (1-&gt;4)-beta-linkages in chitin and chitodextrins.. In Serratia marcescens, this protein is Chitinase A (chiA).